Here is a 737-residue protein sequence, read N- to C-terminus: MLKKILPVLITLAIVHNTPTAWAAEAPKTDSFYLPKSLDLSPLRLHNIESNPYGKDFNYAQQFKTLDLEAVKKDIKTVLTTSQDWWPADYGNYGPFFIRMAWHGAGTYRIYDGRGGADGGQQRFEPLNSWPDNANLDKARRLLWPIKKKYGAKISWGDLMVLTGNVALESMGFKTLGFAGGREDDWQSDLVYWGAGNKMLSDNRDKNGKLPKPLAATQMGLIYVNPEGPNGKPDPVAAAKDIREAFARMAMNDEETVALIAGGHTFGKAHGAASPEKCLGAAPGEAGLEQQGLGWANKCGSGNGKDTITSGLEGAWTTDPTHFTMQYLSNLYKHEWVLTKSPAGAWQWKPKNAANVVPDATDPTKFHPLMMFTTDIALKVDPEYKKITTRFLENPEEFKMAFARAWFKLTHRDMGPAARYLGDEVPKETFIWQDPLPAANYKMIDSADISELKDKILKTGLSDTKLIKTAWASASTFRGTDFRGGDNGARIRLAPQKDWPVNDPAELHSVLAALMEVQNNFNKDRSDGKKVSLSDLIVLGGNAAIEDAAKKAGYSISIPFTPGRTDASQEETDVSSFAVLEPTADGFRNYYDAKRNTLSPIASLIDRANKLELTVPEMTVLIGGLRVLDVNSGGSKAGVLTNTPGQLNNNFFVNLLDMSTKWTKSPKAEGYFDGYDRKTGKLKWTASSVDLVFGSNPELRAVAEVYASDDAKEKFVHDFTKVWEKVMNLDRFDIKNN.

The N-terminal stretch at 1-23 (MLKKILPVLITLAIVHNTPTAWA) is a signal peptide. The tryptophyl-tyrosyl-methioninium (Trp-Tyr) (with M-249) cross-link spans 102–223 (WHGAGTYRIY…LAATQMGLIY (122 aa)). The active-site Proton acceptor is the His-103. The segment at residues 223-249 (YVNPEGPNGKPDPVAAAKDIREAFARM) is a cross-link (tryptophyl-tyrosyl-methioninium (Tyr-Met) (with W-102)). His-264 is a heme b binding site.

It belongs to the peroxidase family. Peroxidase/catalase subfamily. In terms of assembly, homodimer or homotetramer. Heme b serves as cofactor. Post-translationally, formation of the three residue Trp-Tyr-Met cross-link is important for the catalase, but not the peroxidase activity of the enzyme.

The catalysed reaction is H2O2 + AH2 = A + 2 H2O. It catalyses the reaction 2 H2O2 = O2 + 2 H2O. Functionally, bifunctional enzyme with both catalase and broad-spectrum peroxidase activity. This chain is Catalase-peroxidase, found in Yersinia pseudotuberculosis serotype I (strain IP32953).